The following is a 365-amino-acid chain: Probable dual-specificity RNA methyltransferase RlmN (365 aa).

The active-site Proton acceptor is the Glu-111. The region spanning 117 to 351 (ADDRMTACIS…VNIRRSRGKD (235 aa)) is the Radical SAM core domain. Residues Cys-124 and Cys-356 are joined by a disulfide bond. [4Fe-4S] cluster contacts are provided by Cys-131, Cys-135, and Cys-138. S-adenosyl-L-methionine-binding positions include 182–183 (GE), Ser-214, 237–239 (SLH), and Asn-313. Cys-356 serves as the catalytic S-methylcysteine intermediate.

The protein belongs to the radical SAM superfamily. RlmN family. [4Fe-4S] cluster is required as a cofactor.

The protein localises to the cytoplasm. It catalyses the reaction adenosine(2503) in 23S rRNA + 2 reduced [2Fe-2S]-[ferredoxin] + 2 S-adenosyl-L-methionine = 2-methyladenosine(2503) in 23S rRNA + 5'-deoxyadenosine + L-methionine + 2 oxidized [2Fe-2S]-[ferredoxin] + S-adenosyl-L-homocysteine. The catalysed reaction is adenosine(37) in tRNA + 2 reduced [2Fe-2S]-[ferredoxin] + 2 S-adenosyl-L-methionine = 2-methyladenosine(37) in tRNA + 5'-deoxyadenosine + L-methionine + 2 oxidized [2Fe-2S]-[ferredoxin] + S-adenosyl-L-homocysteine. In terms of biological role, specifically methylates position 2 of adenine 2503 in 23S rRNA and position 2 of adenine 37 in tRNAs. This chain is Probable dual-specificity RNA methyltransferase RlmN, found in Cytophaga hutchinsonii (strain ATCC 33406 / DSM 1761 / CIP 103989 / NBRC 15051 / NCIMB 9469 / D465).